The chain runs to 222 residues: Triosephosphate isomerase (222 aa).

N9–K11 contributes to the substrate binding site. H93 serves as the catalytic Electrophile. The Proton acceptor role is filled by E141. Substrate is bound by residues I146, G181, and A202–S203.

This sequence belongs to the triosephosphate isomerase family. As to quaternary structure, homotetramer; dimer of dimers.

The protein resides in the cytoplasm. The enzyme catalyses D-glyceraldehyde 3-phosphate = dihydroxyacetone phosphate. It participates in carbohydrate biosynthesis; gluconeogenesis. Its pathway is carbohydrate degradation; glycolysis; D-glyceraldehyde 3-phosphate from glycerone phosphate: step 1/1. Involved in the gluconeogenesis. Catalyzes stereospecifically the conversion of dihydroxyacetone phosphate (DHAP) to D-glyceraldehyde-3-phosphate (G3P). This chain is Triosephosphate isomerase, found in Methanosarcina acetivorans (strain ATCC 35395 / DSM 2834 / JCM 12185 / C2A).